Consider the following 124-residue polypeptide: FK506-binding protein 1 (124 aa).

The region spanning 23 to 122 (GDTVTIHYDG…VFEVELLGVN (100 aa)) is the PPIase FKBP-type domain.

This sequence belongs to the FKBP-type PPIase family. FKBP1 subfamily.

It localises to the cytoplasm. The enzyme catalyses [protein]-peptidylproline (omega=180) = [protein]-peptidylproline (omega=0). Inhibited by rapamycin. In terms of biological role, PPIases accelerate the folding of proteins. It catalyzes the cis-trans isomerization of proline imidic peptide bonds in oligopeptides. This chain is FK506-binding protein 1 (RBP1), found in Candida albicans (strain SC5314 / ATCC MYA-2876) (Yeast).